The following is a 390-amino-acid chain: Adherens junction-associated protein 1 (390 aa).

The N-terminal stretch at 1-37 (MWITQLLGIRSGPPLGSHAWILIAIFQLAMDFIICES) is a signal peptide. Over 38 to 262 (ESPGKAYKHL…NDTSGLAVHQ (225 aa)) the chain is Extracellular. Positions 218 to 253 (LQNPGIHNGKKSPGRISTTDPNPGNGKTARPPRIPN) are disordered. The helical transmembrane segment at 263–283 (IITITVSLIMVIAALITTLVL) threads the bilayer. The targeting signals stretch occupies residues 283-390 (LKNCCAQSGN…VSEKWFEISC (108 aa)). Topologically, residues 284–390 (KNCCAQSGNA…VSEKWFEISC (107 aa)) are cytoplasmic.

The protein localises to the basolateral cell membrane. Its subcellular location is the apical cell membrane. The protein resides in the cell junction. It localises to the adherens junction. Functionally, may play a role in cell adhesion and cell migration. This Xenopus tropicalis (Western clawed frog) protein is Adherens junction-associated protein 1 (ajap1).